We begin with the raw amino-acid sequence, 178 residues long: Gamma-crystallin S (178 aa).

Ser2 carries the N-acetylserine modification. The N-terminal arm stretch occupies residues 2–5 (SKSG). Beta/gamma crystallin 'Greek key' domains lie at 6 to 44 (TKIT…RVEG) and 45 to 87 (GTWA…RAVH). A connecting peptide region spans residues 88 to 93 (LSSGGQ). 2 Beta/gamma crystallin 'Greek key' domains span residues 94–134 (YKIQ…KVLD) and 135–177 (GVWI…RRIV).

It belongs to the beta/gamma-crystallin family. Monomer.

Functionally, crystallins are the dominant structural components of the vertebrate eye lens. The chain is Gamma-crystallin S (CRYGS) from Canis lupus familiaris (Dog).